The following is a 351-amino-acid chain: Protein-glutamate methylesterase/protein-glutamine glutaminase 2 (351 aa).

In terms of domain architecture, Response regulatory spans 5–122 (RVICVDDSAL…RDGLLDYSEL (118 aa)). A 4-aspartylphosphate modification is found at D56. Residues 154-341 (LNSSEKLVIL…PLPAMSERIL (188 aa)) enclose the CheB-type methylesterase domain. Active-site residues include S166, H192, and D289.

It belongs to the CheB family. Phosphorylated by CheA. Phosphorylation of the N-terminal regulatory domain activates the methylesterase activity.

It is found in the cytoplasm. It catalyses the reaction [protein]-L-glutamate 5-O-methyl ester + H2O = L-glutamyl-[protein] + methanol + H(+). It carries out the reaction L-glutaminyl-[protein] + H2O = L-glutamyl-[protein] + NH4(+). Functionally, involved in chemotaxis. Part of a chemotaxis signal transduction system that modulates chemotaxis in response to various stimuli. Catalyzes the demethylation of specific methylglutamate residues introduced into the chemoreceptors (methyl-accepting chemotaxis proteins or MCP) by CheR. Also mediates the irreversible deamidation of specific glutamine residues to glutamic acid. The polypeptide is Protein-glutamate methylesterase/protein-glutamine glutaminase 2 (Bordetella avium (strain 197N)).